We begin with the raw amino-acid sequence, 162 residues long: Cadmium metallothionein (162 aa).

Residues 1–2 constitute a propeptide that is removed on maturation; sequence MD.

In terms of biological role, the metallothioneins are involved in the cellular sequestration of toxic metal ions. This chain is Cadmium metallothionein (MTT1), found in Tetrahymena thermophila.